Here is a 160-residue protein sequence, read N- to C-terminus: Siroheme decarboxylase NirH subunit (160 aa).

This sequence belongs to the Ahb/Nir family. In terms of assembly, forms a complex composed of NirDL, NirG and NirH. All proteins are required for the total conversion of siroheme to didecarboxysiroheme.

The catalysed reaction is siroheme + 2 H(+) = 12,18-didecarboxysiroheme + 2 CO2. It functions in the pathway porphyrin-containing compound metabolism. In terms of biological role, involved in heme d1 biosynthesis. Catalyzes the decarboxylation of siroheme into didecarboxysiroheme. Siroheme is probably decarboxylated to monodecarboxysiroheme, which is in turn decarboxylated to didecarboxysiroheme. The polypeptide is Siroheme decarboxylase NirH subunit (Paracoccus pantotrophus (Thiosphaera pantotropha)).